A 232-amino-acid chain; its full sequence is Phosphoribosylformylglycinamidine synthase subunit PurQ (232 aa).

Positions 2–232 (RIGVITFPGS…SVVRSTLVEA (231 aa)) constitute a Glutamine amidotransferase type-1 domain. C85 acts as the Nucleophile in catalysis. Active-site residues include H194 and E196.

Part of the FGAM synthase complex composed of 1 PurL, 1 PurQ and 2 PurS subunits.

The protein resides in the cytoplasm. It carries out the reaction N(2)-formyl-N(1)-(5-phospho-beta-D-ribosyl)glycinamide + L-glutamine + ATP + H2O = 2-formamido-N(1)-(5-O-phospho-beta-D-ribosyl)acetamidine + L-glutamate + ADP + phosphate + H(+). The enzyme catalyses L-glutamine + H2O = L-glutamate + NH4(+). The protein operates within purine metabolism; IMP biosynthesis via de novo pathway; 5-amino-1-(5-phospho-D-ribosyl)imidazole from N(2)-formyl-N(1)-(5-phospho-D-ribosyl)glycinamide: step 1/2. Its function is as follows. Part of the phosphoribosylformylglycinamidine synthase complex involved in the purines biosynthetic pathway. Catalyzes the ATP-dependent conversion of formylglycinamide ribonucleotide (FGAR) and glutamine to yield formylglycinamidine ribonucleotide (FGAM) and glutamate. The FGAM synthase complex is composed of three subunits. PurQ produces an ammonia molecule by converting glutamine to glutamate. PurL transfers the ammonia molecule to FGAR to form FGAM in an ATP-dependent manner. PurS interacts with PurQ and PurL and is thought to assist in the transfer of the ammonia molecule from PurQ to PurL. This is Phosphoribosylformylglycinamidine synthase subunit PurQ from Leifsonia xyli subsp. xyli (strain CTCB07).